A 187-amino-acid polypeptide reads, in one-letter code: Elongation factor P (187 aa).

The protein belongs to the elongation factor P family.

The protein localises to the cytoplasm. It participates in protein biosynthesis; polypeptide chain elongation. Involved in peptide bond synthesis. Stimulates efficient translation and peptide-bond synthesis on native or reconstituted 70S ribosomes in vitro. Probably functions indirectly by altering the affinity of the ribosome for aminoacyl-tRNA, thus increasing their reactivity as acceptors for peptidyl transferase. This chain is Elongation factor P, found in Rhizorhabdus wittichii (strain DSM 6014 / CCUG 31198 / JCM 15750 / NBRC 105917 / EY 4224 / RW1) (Sphingomonas wittichii).